The chain runs to 1059 residues: MTPKPNTTSPTNNLPLLSKDSPDIESLLILNPKVQDKANAVPSAVTKKNKHNWKRNEEKGCGSTCGESKLKNDFRDIKHTTLSERGALKEAMRCLKCADAPCQKSCPTQLDVKSFITSISNKNYYGAARQILSDNPLGLTCGMICPTSDLCVGSCNLQASEEGAINIGGLQQYACDVFKQMNVRQIVSKEVRENRNASHKEQVALIGCGPASISCASFLARLGYTDITIYEKRAYIGGLSSAEIPQFRLPYDVVDFEIQLARDIGVQIETNRPLGKDGLTLAKLKEQGAAAVFIGIGNPEPKIDPLFEGLTIENGFYTSKNYLPAVAAASKPGMCGCKRTPLPTMRGRVVVLGAGDTAMDCATSALRCGASRVTIAFRKGFTGIRAVPEEMEAAKEEKCEFLPFSAPRKINVKDGRIVSIEFNKTEQDDNGKWYEDEEQIVILKCDYVISAFGSTLKEDAVLSALQPCQLNKWGGIEVDSTTQQTSEKWVFAGGDVAGVAETTVESVNDGKIAAWNMHRYIQSLHGNQVSETPELPQFFTPIDEVDISVDMCGVKFENPFGLASAPPTTSGPMCRRAFEQGWGFILTKTYGLDKDLVTNVSPRIVRGSTSGPLYGPNQGSFMNIELISEKSCEYWLQCIRELKRDHPTKIVIASIMCVYNKADWIELATKSEEAGADILELNLSCPHGMGEKGMGLACGQSPEIVKEICRWVRACVKIPFFPKMTPNITDVREIARAARDGGASGVTATNTVSSLMHMKADGNAWPAIGSTKRTTYGGMSGSAIRPIAMKAVSSIANELDGFPIMATGGIESAETGLGFLMAGASVLQVCSAVQNQDFTVVDDYCTGLKALLYLSGAESLKNWDGQSPPIEKHQKGKPILLQGQKKMPFFGKYRDEREKLEAIKLSESNLLDTENYHFASRPDTQVSRVPTVEDVIGKALPRIGPYVTLDNQEQKVAIIDDDMCINCGKCYMTCNDSGYQAITFDPVTHQPHVTEDDCTGCTLCYSVCPIPECIEMVPRTGPWKAPKRGVKPSVEPGTPKVVKVDQRGRVILDTTGGMQ.

The 4Fe-4S ferredoxin-type 1 domain occupies 84–118 (ERGALKEAMRCLKCADAPCQKSCPTQLDVKSFITS). Residues C94, C97, C102, C106, C145, C151, C155, and Q171 each contribute to the [4Fe-4S] cluster site. FAD contacts are provided by residues 207 to 211 (GCGPA), 231 to 239 (EKRAYIGGL), R248, and L274. NADP(+) contacts are provided by residues 354 to 357 (AGDT), 378 to 379 (RK), R385, 451 to 453 (AFG), and 495 to 501 (DVAGVAE). 494–503 (GDVAGVAETT) serves as a coordination point for FAD. Residues S564 and 588 to 589 (KT) contribute to the FMN site. Substrate contacts are provided by residues N623 and 682-684 (NLS). C685 acts as the Proton acceptor in catalysis. K723 contributes to the FMN binding site. 750–751 (NT) is a substrate binding site. Residues G781, 807–809 (TGG), and 830–831 (CS) contribute to the FMN site. 4Fe-4S ferredoxin-type domains are found at residues 955 to 987 (KVAI…FDPV) and 989 to 1019 (HQPH…MVPR). 8 residues coordinate [4Fe-4S] cluster: C964, C967, C970, C974, C998, C1001, C1004, and C1008.

The protein belongs to the dihydropyrimidine dehydrogenase family. [4Fe-4S] cluster serves as cofactor. FAD is required as a cofactor. It depends on FMN as a cofactor.

The catalysed reaction is 5,6-dihydrouracil + NADP(+) = uracil + NADPH + H(+). The protein operates within amino-acid biosynthesis; beta-alanine biosynthesis. Involved in pyrimidine base degradation. Catalyzes the reduction of uracil and thymine. Involved in the degradation of the chemotherapeutic drug 5-fluorouracil. The protein is Dihydropyrimidine dehydrogenase [NADP(+)] (dpyd-1) of Caenorhabditis elegans.